The following is a 509-amino-acid chain: Angiopoietin-4 (509 aa).

An N-terminal signal peptide occupies residues 1 to 21 (MLCQPAMLLDGLLLLATMAAA). Asn-105, Asn-135, Asn-149, Asn-167, Asn-256, Asn-306, Asn-317, and Asn-417 each carry an N-linked (GlcNAc...) asparagine glycan. A coiled-coil region spans residues 181 to 269 (LSTNKLERQM…LQQQQQQLTE (89 aa)). The region spanning 288-508 (KTPKPVFQDC…GTRMMLRPMG (221 aa)) is the Fibrinogen C-terminal domain. A disulfide bond links Cys-297 and Cys-326. A disordered region spans residues 416–436 (VNDSSSSAGRKNSLAPQGTKF). Cys-450 and Cys-463 form a disulfide bridge.

Homodimer; disulfide-linked. Interacts with TEK/TIE2. Widely expressed.

The protein resides in the secreted. Binds to TEK/TIE2, modulating ANGPT1 signaling. Can induce tyrosine phosphorylation of TEK/TIE2. Promotes endothelial cell survival, migration and angiogenesis. The polypeptide is Angiopoietin-4 (Angpt4) (Mus musculus (Mouse)).